The sequence spans 310 residues: Transcription initiation factor IIB (310 aa).

The TFIIB-type zinc-finger motif lies at 9 to 41 (EKETKCPECGSDDLRGDYERAEIVCGKCGLVID). Residues cysteine 14, cysteine 17, cysteine 33, and cysteine 36 each contribute to the Zn(2+) site. Repeat copies occupy residues 127–210 (SELD…TREL) and 221–302 (DYVP…ELTE).

It belongs to the TFIIB family.

Functionally, stabilizes TBP binding to an archaeal box-A promoter. Also responsible for recruiting RNA polymerase II to the pre-initiation complex (DNA-TBP-TFIIB). The polypeptide is Transcription initiation factor IIB (Methanothermobacter thermautotrophicus (strain ATCC 29096 / DSM 1053 / JCM 10044 / NBRC 100330 / Delta H) (Methanobacterium thermoautotrophicum)).